We begin with the raw amino-acid sequence, 371 residues long: Thyroid transcription factor 1 (371 aa).

Positions 161–220 form a DNA-binding region, homeobox; sequence RRKRRVLFSQAQVYELERRFKQQKYLSAPEREHLASMIHLTPTQVKIWFQNHRYKMKRQA. Disordered stretches follow at residues 219 to 294 and 308 to 342; these read QAKD…QQQA and SGGPGLGAHPGHQPGSAGQSPDLAHHAASPAALQG. Residues 233–243 show a composition bias toward gly residues; sequence SGGGGGGGGAG. Low complexity-rich tracts occupy residues 244 to 253 and 272 to 294; these read CPQQQQAQQQ and AGAPAPGAGSLQGHAQQQAQQQA.

The protein belongs to the NK-2 homeobox family. Phosphorylated on serine residues. As to expression, thyroid, lung and CNS.

It localises to the nucleus. Transcription factor that binds and activates the promoter of thyroid specific genes such as thyroglobulin, thyroperoxidase, and thyrotropin receptor. Crucial in the maintenance of the thyroid differentiation phenotype. May play a role in lung development and surfactant homeostasis. The polypeptide is Thyroid transcription factor 1 (TITF1) (Canis lupus familiaris (Dog)).